A 110-amino-acid chain; its full sequence is Transcription factor S (110 aa).

Residues Cys4, Cys7, Cys22, Cys25, Cys71, Cys74, Cys99, and Cys102 each contribute to the Zn(2+) site. The TFIIS-type zinc-finger motif lies at 67 to 107; the sequence is TKVTCPKCGNDTAYWWEMQTRAGDEPSTIFYKCTKCGYTWR.

The protein belongs to the archaeal rpoM/eukaryotic RPA12/RPB9/RPC11 RNA polymerase family.

Its subcellular location is the chromosome. Its function is as follows. Involved in transcriptional proofreading and fidelity. Induces RNA cleavage activity in RNA polymerase (RNAP). Stimulates transcription elongation by RNAP on both naked DNA and histone-bound DNA (chromatin), facilitating transcription through the histone barrier. Stimulation depends on transcript cleavage. In the presence of TFS, the cleavage activity of RNAP truncates RNA back to position +15 in a stepwise manner by releasing mainly dinucleotides from the 3'-end of the nascent RNA. The truncated RNAs are able to continue elongation. Misincorporation of nucleotides during elongation of transcription leads to arrested elongation complexes which are rescued by TFS-promoted removal of a dinucleotide from the 3'-end. TFS is able to induce a cleavage resynthesis cycle in stalled elongation complexes (resulting from the next missing nucleotide or a reduced incorporation rate of a wrong nucleotide) preventing misincorporation and enabling proofreading in a post-incorporation manner. Pausing of elongation complexes is the main determinant of TFS-induced RNA cleavage. The protein is Transcription factor S of Thermococcus kodakarensis (strain ATCC BAA-918 / JCM 12380 / KOD1) (Pyrococcus kodakaraensis (strain KOD1)).